Consider the following 848-residue polypeptide: Nuclear cap-binding protein subunit 1 (848 aa).

Residues 8–228 (LLRIGEKGPE…DLLDRIQSLA (221 aa)) enclose the MIF4G domain. Positions 767–786 (EDDKPSAMDVDSENGNPKKS) are disordered.

The protein belongs to the NCBP1 family. As to quaternary structure, component of the nuclear cap-binding complex (CBC), a heterodimer composed of ABH1/CBP80 and CBP20 that interacts with m7GpppG-capped RNA. Expressed in all tissues analyzed, including roots, stems, leaves and flowers.

It is found in the nucleus. It localises to the cytoplasm. Component of the cap-binding complex (CBC), which binds cotranscriptionally to the 5'-cap of pre-mRNAs and is involved in various processes such as pre-mRNA splicing and RNA-mediated gene silencing (RNAi) by microRNAs (miRNAs). The CBC complex is involved in miRNA-mediated RNA interference and is required for primary miRNA processing. In the CBC complex, ABH1/CBP80 does not bind directly capped RNAs (m7GpppG-capped RNA) but is required to stabilize the movement of the N-terminal loop of CBP20 and lock the CBC into a high affinity cap-binding state with the cap structure. Involved in flowering regulation, possibly by regulating pre-mRNA splicing of FLC gene. Acts as a negative regulator of abscisic acid signaling in guard cells. This is Nuclear cap-binding protein subunit 1 (ABH1) from Arabidopsis thaliana (Mouse-ear cress).